We begin with the raw amino-acid sequence, 810 residues long: MTKRTLGYSYPIALTISLVPALTPAIVQAAPLTPPPATGILDGLCYDYVPKIEKLAPGKDANAQPVEVDADRLEAKQGGTAVYQGDVKVRQGVRKFDSDYAELDQKSRDVIAIGNIYYNDGQITVTSDKTLKSNLDTKNSELEEGKYQVHGSPVRGSADRVTMTNNNQNITLEGAQYTTCPPGQEVWTLKAGSIDIDQTEVFGEAWNASLWLYDYPVFYFPYINFPIKDERKTGLLYPGYTQSSKNGMDITQPFYWNIAPNYDATITSRFMDRRGLMEQVQFRYMPDPAHVGSLYFENLANDKQYDETPSLNQAMSDGHRYLLNANHTSLFADNAMRVSLDYTKVRDRDYNYFNDFSPKVGTQVENQLQQSLMAGYFQPNWNINTEVRTYQILLASAQQPHELMPRIDHNYYQQGSWYDLAWNTEITKFGYNNAQAIAQNQGGAYTGTRVYTAPTLTMPLINEAGYYLDSQYKLMYTRYDQEVPDNMSQTFVSRFTPENGNGVTLDEGIITRTLPSFRLKGGMTFERNQNWFGGDANQTLEPEFQYLYVPYKNQDNIGVYDSTSMRQDYYSLFSDRRYAGLDRISDSNRVSIGLTSRVYDEAGDERIRLAVAQAFDFVAPRVKLYPSETLTTNTRSPLSFEGDAKINEQWFAHAGAQYDVDQSRLSSANSALEYRREKLISQLNHRFVRDANYDLENKGQVTDLNQIGLLLTTPLNDQWHLYGGYYQELNQSVKSDRKVGLKYDSCCWSINFNLEWVNTPDNVTMRPTSERSLGIQFEMKGLGSVGTGSKGTSLDTEALPYIRPFNLRDQ.

The first 29 residues, 1–29 (MTKRTLGYSYPIALTISLVPALTPAIVQA), serve as a signal peptide directing secretion.

It belongs to the LptD family. As to quaternary structure, component of the lipopolysaccharide transport and assembly complex. Interacts with LptE and LptA.

Its subcellular location is the cell outer membrane. Its function is as follows. Together with LptE, is involved in the assembly of lipopolysaccharide (LPS) at the surface of the outer membrane. The polypeptide is LPS-assembly protein LptD (Aeromonas hydrophila subsp. hydrophila (strain ATCC 7966 / DSM 30187 / BCRC 13018 / CCUG 14551 / JCM 1027 / KCTC 2358 / NCIMB 9240 / NCTC 8049)).